Consider the following 2280-residue polypeptide: Protein Ycf2 (2280 aa).

1634–1641 (GSIGTGRS) is a binding site for ATP.

It belongs to the Ycf2 family.

The protein localises to the plastid. The protein resides in the chloroplast stroma. Functionally, probable ATPase of unknown function. Its presence in a non-photosynthetic plant (Epifagus virginiana) and experiments in tobacco indicate that it has an essential function which is probably not related to photosynthesis. This is Protein Ycf2 from Eucalyptus globulus subsp. globulus (Tasmanian blue gum).